Consider the following 254-residue polypeptide: Gamma-glutamyl-gamma-aminobutyrate hydrolase (254 aa).

In terms of domain architecture, Glutamine amidotransferase type-1 spans 16-250 (RNRLKGHATQ…ITACQHHIAE (235 aa)). Cys114 serves as the catalytic Nucleophile. Active-site residues include His222 and Glu224.

Belongs to the peptidase C26 family.

It catalyses the reaction 4-(gamma-L-glutamylamino)butanoate + H2O = 4-aminobutanoate + L-glutamate. Its pathway is amine and polyamine degradation; putrescine degradation; 4-aminobutanoate from putrescine: step 4/4. Involved in the breakdown of putrescine via hydrolysis of the gamma-glutamyl linkage of gamma-glutamyl-gamma-aminobutyrate. The sequence is that of Gamma-glutamyl-gamma-aminobutyrate hydrolase (puuD) from Escherichia coli O157:H7.